The chain runs to 244 residues: Mono-ADP-ribosyltransferase C3 (244 aa).

The first 40 residues, 1 to 40, serve as a signal peptide directing secretion; that stretch reads MKGIRKSILCLVLSAGVIAPVTTSIVQSPQKCYACTVDKG. The 201-residue stretch at 44-244 folds into the TR mART core domain; it reads DTFTEFTNVE…QIMITAMIFK (201 aa). Residues T80, N87, R91, 128–131, and 167–169 each bind NAD(+); these read RGDD and RTE. R128 is a catalytic residue. The active site involves S174. NAD(+) contacts are provided by residues 182–185 and 211–213; these read FGGR and QLE. E213 is a catalytic residue.

This sequence to exoenzymes 3 of C.limosum and C.botulinum D phage, and to S.aureus ediN. Monomer.

The protein resides in the secreted. It catalyses the reaction L-asparaginyl-[protein] + NAD(+) = N(4)-(ADP-D-ribosyl)-L-asparaginyl-[protein] + nicotinamide + H(+). In terms of biological role, ADP-ribosylates eukaryotic Rho and Rac proteins on an asparagine residue. This chain is Mono-ADP-ribosyltransferase C3, found in Clostridium botulinum C phage (Clostridium botulinum C bacteriophage).